The following is a 200-amino-acid chain: Flavin prenyltransferase UbiX (200 aa).

Residues 15–17 (GAS), T41, 102–105 (SMGT), and R137 each bind FMN. Positions 167 and 183 each coordinate dimethylallyl phosphate.

Belongs to the UbiX/PAD1 family.

It catalyses the reaction dimethylallyl phosphate + FMNH2 = prenylated FMNH2 + phosphate. Functionally, flavin prenyltransferase that catalyzes the synthesis of the prenylated FMN cofactor (prenyl-FMN) for 4-hydroxy-3-polyprenylbenzoic acid decarboxylase UbiD. The prenyltransferase is metal-independent and links a dimethylallyl moiety from dimethylallyl monophosphate (DMAP) to the flavin N5 and C6 atoms of FMN. The chain is Flavin prenyltransferase UbiX from Alkalihalophilus pseudofirmus (strain ATCC BAA-2126 / JCM 17055 / OF4) (Bacillus pseudofirmus).